The following is a 520-amino-acid chain: Polycomb protein PHO (520 aa).

4 C2H2-type zinc fingers span residues 357-381, 386-408, 414-438, and 444-468; these read IACP…LHTH, HVCA…QLVH, FQCT…VRIH, and FVCP…ILTH. Residues 475–497 are disordered; that stretch reads TSISGKSGCSNAESNSQSEDTSA.

As to quaternary structure, component of the Esc/E(z) complex, composed of Esc, E(z), Su(z)12, HDAC1/Rpd3 and Caf1-55. This complex is distinct from the PRC1 complex, which contains many other PcG proteins like Pc, Ph, Psc, Su(z)2. The two complexes however cooperate and interact together during the first 3 hours of development to establish PcG silencing. Component of the chromatin remodeling Ino80 complex. Interacts with Sfmbt to form a pho-repressive complex (PhoRC).

The protein resides in the nucleus. In terms of biological role, polycomb group (PcG) protein that binds to the 5'-CNGCCATNNNNG-3' sequence found in the regulatory regions of many genes. PcG proteins act by forming multiprotein complexes, which are required to maintain the transcriptionally repressive state of homeotic genes throughout development. PcG proteins are not required to initiate repression, but to maintain it during later stages of development. They probably act via the methylation of histones, rendering chromatin heritably changed in its expressibility. Probably targets the Esc/E(z) complex to DNA. Necessary but not sufficient to recruit a functional PcG repressive complex that represses target genes, suggesting that the recruitment of the distinct PRC1 complex is also required to allow a subsequent repression. Its function is as follows. Proposed core component of the chromatin remodeling Ino80 complex which is involved in transcriptional regulation, DNA replication and probably DNA repair. This Drosophila melanogaster (Fruit fly) protein is Polycomb protein PHO (pho).